We begin with the raw amino-acid sequence, 578 residues long: Proline--tRNA ligase (578 aa).

The protein belongs to the class-II aminoacyl-tRNA synthetase family. ProS type 1 subfamily. In terms of assembly, homodimer.

Its subcellular location is the cytoplasm. The enzyme catalyses tRNA(Pro) + L-proline + ATP = L-prolyl-tRNA(Pro) + AMP + diphosphate. In terms of biological role, catalyzes the attachment of proline to tRNA(Pro) in a two-step reaction: proline is first activated by ATP to form Pro-AMP and then transferred to the acceptor end of tRNA(Pro). As ProRS can inadvertently accommodate and process non-cognate amino acids such as alanine and cysteine, to avoid such errors it has two additional distinct editing activities against alanine. One activity is designated as 'pretransfer' editing and involves the tRNA(Pro)-independent hydrolysis of activated Ala-AMP. The other activity is designated 'posttransfer' editing and involves deacylation of mischarged Ala-tRNA(Pro). The misacylated Cys-tRNA(Pro) is not edited by ProRS. This Burkholderia multivorans (strain ATCC 17616 / 249) protein is Proline--tRNA ligase.